The chain runs to 313 residues: Olfactory receptor 10Z1 (313 aa).

Residues Met-1–Leu-25 lie on the Extracellular side of the membrane. An N-linked (GlcNAc...) asparagine glycan is attached at Asn-5. Residues Leu-26–Ile-46 form a helical membrane-spanning segment. Topologically, residues Ile-47–His-54 are cytoplasmic. A helical transmembrane segment spans residues Leu-55–Leu-75. Over Gly-76–Ala-99 the chain is Extracellular. A disulfide bond links Cys-97 and Cys-189. Residues Gln-100–Phe-120 traverse the membrane as a helical segment. Over Asp-121–Thr-139 the chain is Cytoplasmic. Residues Leu-140–Thr-160 traverse the membrane as a helical segment. Over Leu-161 to Leu-197 the chain is Extracellular. A helical membrane pass occupies residues Arg-198 to Ser-217. Residues Tyr-218 to Ala-237 are Cytoplasmic-facing. Residues Phe-238–Val-258 form a helical membrane-spanning segment. Residues Tyr-259–Asp-271 are Extracellular-facing. Residues Gln-272–Leu-292 form a helical membrane-spanning segment. At Arg-293 to Gly-313 the chain is on the cytoplasmic side.

This sequence belongs to the G-protein coupled receptor 1 family.

The protein localises to the cell membrane. Odorant receptor. The protein is Olfactory receptor 10Z1 (OR10Z1) of Homo sapiens (Human).